The primary structure comprises 232 residues: Small ribosomal subunit protein uS3 (232 aa).

One can recognise a KH type-2 domain in the interval 39–107 (IRAFLKKKLY…EVNVNIKEER (69 aa)). Positions 211-232 (GVQPEKTEEEAPKKTRRARRGK) are disordered. Over residues 213-223 (QPEKTEEEAPK) the composition is skewed to basic and acidic residues.

This sequence belongs to the universal ribosomal protein uS3 family. In terms of assembly, part of the 30S ribosomal subunit. Forms a tight complex with proteins S10 and S14.

Its function is as follows. Binds the lower part of the 30S subunit head. Binds mRNA in the 70S ribosome, positioning it for translation. In Campylobacter concisus (strain 13826), this protein is Small ribosomal subunit protein uS3.